A 956-amino-acid polypeptide reads, in one-letter code: DNA replication helicase (956 aa).

120–127 serves as a coordination point for ATP; it reads GTAGAGKT. The tract at residues 658–694 is disordered; the sequence is PINNHVDADSSQGGQSVPVSQRMEHGQEETHDIPCLS. A compositionally biased stretch (low complexity) spans 667 to 678; sequence SSQGGQSVPVSQ. The span at 679–694 shows a compositional bias: basic and acidic residues; sequence RMEHGQEETHDIPCLS.

This sequence belongs to the herpesviridae helicase family. In terms of assembly, associates with the primase and the primase-associated factor to form the helicase-primase complex.

It localises to the host nucleus. Functionally, component of the helicase/primase complex. Unwinds the DNA at the replication forks and generates single-stranded DNA for both leading and lagging strand synthesis. The primase synthesizes short RNA primers on the lagging strand that the polymerase elongates using dNTPs. Possesses helicase-like motifs and therefore may act as the helicase subunit of the complex. The polypeptide is DNA replication helicase (Human cytomegalovirus (strain Merlin) (HHV-5)).